The primary structure comprises 283 residues: Phosphatidylglycerol--prolipoprotein diacylglyceryl transferase (283 aa).

Helical transmembrane passes span L17–G37, F56–Y76, and W92–F112. A 1,2-diacyl-sn-glycero-3-phospho-(1'-sn-glycerol) is bound at residue R139. Transmembrane regions (helical) follow at residues G222–A242 and G255–V275.

This sequence belongs to the Lgt family.

It is found in the cell inner membrane. It carries out the reaction L-cysteinyl-[prolipoprotein] + a 1,2-diacyl-sn-glycero-3-phospho-(1'-sn-glycerol) = an S-1,2-diacyl-sn-glyceryl-L-cysteinyl-[prolipoprotein] + sn-glycerol 1-phosphate + H(+). It functions in the pathway protein modification; lipoprotein biosynthesis (diacylglyceryl transfer). Functionally, catalyzes the transfer of the diacylglyceryl group from phosphatidylglycerol to the sulfhydryl group of the N-terminal cysteine of a prolipoprotein, the first step in the formation of mature lipoproteins. The sequence is that of Phosphatidylglycerol--prolipoprotein diacylglyceryl transferase from Neisseria gonorrhoeae (strain ATCC 700825 / FA 1090).